The following is a 152-amino-acid chain: Transcriptional regulator MraZ (152 aa).

SpoVT-AbrB domains are found at residues 5–52 (ATLV…PLPE) and 81–124 (ASEC…DETT).

This sequence belongs to the MraZ family. As to quaternary structure, forms oligomers.

The protein resides in the cytoplasm. The protein localises to the nucleoid. Functionally, negatively regulates its own expression and that of the subsequent genes in the proximal part of the division and cell wall (dcw) gene cluster. Acts by binding directly to DNA. May also regulate the expression of genes outside the dcw cluster. In Klebsiella pneumoniae subsp. pneumoniae (strain ATCC 700721 / MGH 78578), this protein is Transcriptional regulator MraZ.